Consider the following 254-residue polypeptide: 3-deoxy-manno-octulosonate cytidylyltransferase (254 aa).

It belongs to the KdsB family.

The protein resides in the cytoplasm. The enzyme catalyses 3-deoxy-alpha-D-manno-oct-2-ulosonate + CTP = CMP-3-deoxy-beta-D-manno-octulosonate + diphosphate. The protein operates within nucleotide-sugar biosynthesis; CMP-3-deoxy-D-manno-octulosonate biosynthesis; CMP-3-deoxy-D-manno-octulosonate from 3-deoxy-D-manno-octulosonate and CTP: step 1/1. It participates in bacterial outer membrane biogenesis; lipopolysaccharide biosynthesis. Activates KDO (a required 8-carbon sugar) for incorporation into bacterial lipopolysaccharide in Gram-negative bacteria. The sequence is that of 3-deoxy-manno-octulosonate cytidylyltransferase from Tolumonas auensis (strain DSM 9187 / NBRC 110442 / TA 4).